A 336-amino-acid chain; its full sequence is Ornithine carbamoyltransferase, catabolic (336 aa).

Carbamoyl phosphate is bound by residues 57-60, Gln84, Arg108, and 135-138; these read STRT and HPTQ. L-ornithine contacts are provided by residues Asn168, Asp232, and 236 to 237; that span reads SM. Carbamoyl phosphate is bound by residues 274–275 and Arg321; that span reads CL.

This sequence belongs to the aspartate/ornithine carbamoyltransferase superfamily. OTCase family.

Its subcellular location is the cytoplasm. It carries out the reaction carbamoyl phosphate + L-ornithine = L-citrulline + phosphate + H(+). It functions in the pathway amino-acid degradation; L-arginine degradation via ADI pathway; carbamoyl phosphate from L-arginine: step 2/2. Reversibly catalyzes the transfer of the carbamoyl group from carbamoyl phosphate (CP) to the N(epsilon) atom of ornithine (ORN) to produce L-citrulline. This is Ornithine carbamoyltransferase, catabolic from Burkholderia mallei (strain ATCC 23344).